Consider the following 258-residue polypeptide: Imidazole glycerol phosphate synthase subunit HisF (258 aa).

Active-site residues include aspartate 11 and aspartate 130.

Belongs to the HisA/HisF family. As to quaternary structure, heterodimer of HisH and HisF.

Its subcellular location is the cytoplasm. The catalysed reaction is 5-[(5-phospho-1-deoxy-D-ribulos-1-ylimino)methylamino]-1-(5-phospho-beta-D-ribosyl)imidazole-4-carboxamide + L-glutamine = D-erythro-1-(imidazol-4-yl)glycerol 3-phosphate + 5-amino-1-(5-phospho-beta-D-ribosyl)imidazole-4-carboxamide + L-glutamate + H(+). It functions in the pathway amino-acid biosynthesis; L-histidine biosynthesis; L-histidine from 5-phospho-alpha-D-ribose 1-diphosphate: step 5/9. Functionally, IGPS catalyzes the conversion of PRFAR and glutamine to IGP, AICAR and glutamate. The HisF subunit catalyzes the cyclization activity that produces IGP and AICAR from PRFAR using the ammonia provided by the HisH subunit. The sequence is that of Imidazole glycerol phosphate synthase subunit HisF from Yersinia pseudotuberculosis serotype O:1b (strain IP 31758).